Reading from the N-terminus, the 865-residue chain is MSRYNVRETEAKWQAAWADAGSFAVTADPAKPKYYVLEMFPYPSGRIHMGHVRNYTMGDVVARFKRAKGFNVLHPMGWDAFGLPAENAALEKGVHPGKWTYENIATMRGQLQTMGLAIDWSREVATCRPEYYRHEQKIFLDFLKAGLAYRKESWVNWDPVDNTVLANEQVVDGRGWRTGALVEKRKLSQWFLKITHFADDLLEALKGLERWPDKVRTMQENWIGRSTGCRFFFRMSDGHPDLEVFTTRPDTLYGASFVAISPNHPLAATLAAGNPALADFIAECNRTSTSEADIETAEKKGFATGVTAEHPFVPGWTLPVYVANFVLMEYGTGAIFGCPAHDQRDLDFARKYGLPVKPVVIPEGQDPAAFAVADEAYTGPGVLRNSDFLDGLGVEEAKAAAIRRIEEAGRGQGTTMYRLRDWGVSRQRYWGCPIPVIHCPKCGAVPVPEAQLPVTLPDDVTFDAPGNPLARHPTWKHVACPCCGGAAERETDTFDTFIESSWYFLRFADPRNGTLAFDPELVKYWLPVDQYIGGVEHAVLHLLYARFWTRALAHCGYLDLAEPFAGLFTQGMVTHATYQGTDGKWLFPAEVEFREGAMVKSDDGTAVTVGPIIKMSKSKKNVVDPQQIIESYGADAARLFMMSDSPPDRDLEWTTAGIDGAWRYINRLWRLVTEPGFDLPAPGTPAPASFGEEATAIRRLAHKAAQQIGEDIEGFRFNSSVARLRSFSNGVQDAFAKLAAKAAAGTAPAADEAWAAREALEMLARMVEPMMPHLAHEMWVELGHAGLLLDRPWPAVDAALVVEDTVTVAVQVNGKLRATINLRRDAGNEEAQAAALADPAVQKAVEGKPLRKVVVVPNRIVNVVV.

A 'HIGH' region motif is present at residues 41 to 51; that stretch reads PYPSGRIHMGH. The short motif at 614–618 is the 'KMSKS' region element; it reads KMSKS. K617 contacts ATP.

It belongs to the class-I aminoacyl-tRNA synthetase family.

It localises to the cytoplasm. The enzyme catalyses tRNA(Leu) + L-leucine + ATP = L-leucyl-tRNA(Leu) + AMP + diphosphate. In Rhodospirillum centenum (strain ATCC 51521 / SW), this protein is Leucine--tRNA ligase.